The sequence spans 8886 residues: Obscurin (8886 aa).

Ig-like domains are found at residues 9–99 (PRFL…LRVD), 109–201 (PHFL…LVVD), 234–320 (PPSP…QTYS), and 329–415 (PTVP…AELS). Residues Cys-30 and Cys-81 are joined by a disulfide bond. The interval 135-165 (SPQPAVSWSKDGRRLGPPDAPHVRVEEHGES) is disordered. Residues 144–164 (KDGRRLGPPDAPHVRVEEHGE) show a composition bias toward basic and acidic residues. 2 disulfides stabilise this stretch: Cys-257-Cys-309 and Cys-352-Cys-402. At Ser-393 the chain carries Phosphoserine. The region spanning 513–610 (PPADPVVKAK…FPGTMHLVPM (98 aa)) is the Fibronectin type-III 1 domain. Ig-like domains follow at residues 702 to 793 (PSSK…QDIT), 859 to 951 (PKLV…VAEP), 951 to 1043 (PKLV…VAEP), 1043 to 1135 (PKMV…VTEP), 1135 to 1227 (PKLV…VAEP), 1227 to 1319 (PKLV…VTEP), 1319 to 1407 (PKLV…FRLD), 1411 to 1503 (PKLV…VAEP), 1503 to 1595 (PKLV…VAEP), 1595 to 1687 (PKLA…VAEP), 1687 to 1779 (PKLA…VAEP), 1779 to 1871 (PKLA…VAEP), 1871 to 1963 (PKLM…VAEP), 1963 to 2051 (PKLV…FRLD), 2055 to 2147 (TRLM…VAEA), 2152 to 2241 (PERP…EEVA), 2242 to 2325 (AKFS…ARLT), 2329 to 2415 (PRVV…AALR), 2420 to 2504 (PVLF…AKLN), 2598 to 2681 (PVSF…ASLR), 2721 to 2812 (PVTL…QSIT), 2900 to 2984 (PVVL…AEVT), 3078 to 3162 (PVVF…SKVS), 3258 to 3342 (PVDI…AKLC), 3348 to 3431 (NRFT…ARLL), 3527 to 3610 (PSIF…SSIV), 3616 to 3700 (PVRF…ATLT), 3785 to 3876 (ATLT…ATLT), 3881 to 3964 (PAKF…ATLT), 4042 to 4125 (PTKF…ATLS), 4130 to 4213 (PSRF…ATLS), 4219 to 4301 (PRFI…ATLN), 4307 to 4389 (PRFI…AVLT), 4395 to 4477 (PKFT…ATLS), 4483 to 4565 (PRFI…ATLS), 4571 to 4653 (PRFI…ATLS), 4659 to 4741 (PRFI…ATLS), 4746 to 4829 (PAKF…ATLS), 4833 to 4916 (PQVV…TSAT), 4923 to 5007 (PVRF…ARLS), 5013 to 5105 (PKFK…PEVT), 5378 to 5464 (LEVL…ARLS), and 5557 to 5659 (PQMV…TFNV). Disulfide bonds link Cys-885-Cys-935, Cys-977-Cys-1027, Cys-1069-Cys-1119, Cys-1161-Cys-1211, Cys-1253-Cys-1303, Cys-1345-Cys-1395, Cys-1437-Cys-1487, Cys-1529-Cys-1579, Cys-1621-Cys-1671, Cys-1713-Cys-1763, Cys-1805-Cys-1855, Cys-1897-Cys-1947, Cys-1989-Cys-2039, and Cys-2081-Cys-2131. Cysteines 2263 and 2313 form a disulfide. Cystine bridges form between Cys-2620-Cys-2669, Cys-2743-Cys-2793, Cys-2922-Cys-2972, Cys-3100-Cys-3150, Cys-3280-Cys-3330, Cys-3369-Cys-3419, Cys-3549-Cys-3599, and Cys-3638-Cys-3688. Position 3321 is a phosphoserine (Ser-3321). Ser-3802 bears the Phosphoserine mark. Cystine bridges form between Cys-3815-Cys-3864, Cys-3903-Cys-3952, Cys-4064-Cys-4113, Cys-4152-Cys-4201, Cys-4240-Cys-4289, Cys-4328-Cys-4377, Cys-4416-Cys-4465, Cys-4504-Cys-4553, Cys-4592-Cys-4641, Cys-4680-Cys-4729, Cys-4768-Cys-4817, Cys-4856-Cys-4906, Cys-4945-Cys-4995, and Cys-5034-Cys-5086. At Ser-4960 the chain carries Phosphoserine. In terms of domain architecture, Fibronectin type-III 2 spans 5471–5569 (PPEDAEVVGR…VKIAPAPAPA (99 aa)). A disulfide bond links Cys-5590 and Cys-5643. The residue at position 5699 (Ser-5699) is a Phosphoserine. Positions 5700–5736 (REPTLDSISELPEEDSRVQHLRQEAEETAPDLSEGYS) are disordered. Thr-5703 carries the post-translational modification Phosphothreonine. Position 5706 is a phosphoserine (Ser-5706). Positions 5713–5724 (EDSRVQHLRQEA) are enriched in basic and acidic residues. At Thr-5737 the chain carries Phosphothreonine. The residue at position 5754 (Ser-5754) is a Phosphoserine. Positions 5821 to 5850 (LDKAAVKIQAAFKGYKVRKEMKQQEGPVFS) constitute an IQ domain. Residues 5847 to 5930 (PVFSRTFGDT…QVSTKSGRVS (84 aa)) enclose the Ig-like 48 domain. Cys-5868 and Cys-5920 form a disulfide bridge. The disordered stretch occupies residues 5977–5996 (EEELFLSADEGPGEPEEPAD). 3 consecutive Ig-like domains span residues 6077 to 6166 (PVFL…AELR), 6209 to 6298 (PQVL…ARLL), and 6320 to 6416 (PRIL…LHIS). Cys-6098 and Cys-6150 are disulfide-bonded. The segment at 6504–6546 (KLQVPGGDSDEETKTPSASPRHGRSRPSSSVQESSSESEDGDS) is disordered. Ser-6512 bears the Phosphoserine mark. A Phosphothreonine modification is found at Thr-6518. Positions 6519-6538 (PSASPRHGRSRPSSSVQESS) are enriched in low complexity. Phosphoserine occurs at positions 6520 and 6522. The 68-residue stretch at 6549–6616 (EIFDIYVVTA…SPAYLDKRLK (68 aa)) folds into the SH3 domain. The 185-residue stretch at 6642 to 6826 (RLSSVIQELL…SALPQRAENK (185 aa)) folds into the DH domain. A PH domain is found at 6844–6953 (EPIRQGHFIV…WVKEICGIQQ (110 aa)). A 1,2-diacyl-sn-glycero-3-phospho-(1D-myo-inositol-4,5-bisphosphate) is bound at residue Arg-6924. A 1,2-diacyl-sn-glycero-3-phospho-(1D-myo-inositol-3,4-bisphosphate) is bound at residue Arg-6929. Ig-like domains are found at residues 6963 to 7046 (PEFE…GNAS) and 7057 to 7147 (PRFV…GELY). 2 disulfide bridges follow: Cys-6984–Cys-7036 and Cys-7078–Cys-7131. A disordered region spans residues 7200–7257 (ALGPSPGDLPNTRQSEPPAFEEAASQIPGAASGTPEVSQPGTHKGLEQETTSSGSQGW). Over residues 7247–7257 (QETTSSGSQGW) the composition is skewed to polar residues. Positions 7306–7394 (PSMQVTIEDV…GQVLCKAELL (89 aa)) constitute an Ig-like 54 domain. The 254-residue stretch at 7416–7669 (YDVQEEIGRG…TSQCLAHPWF (254 aa)) folds into the Protein kinase 1 domain. Residues 7422-7430 (IGRGVFGFV) and Lys-7445 contribute to the ATP site. Catalysis depends on Asp-7535, which acts as the Proton acceptor. 3 disordered regions span residues 7717 to 7810 (GPPD…SPGC), 7879 to 8106 (EQAS…TTRK), and 8150 to 8180 (SSEEQDEAATESPQPLESLGPIAEASGVPLR). Ser-7779 carries the post-translational modification Phosphoserine. Residues 7793 to 7804 (AAVPASPQSAGP) are compositionally biased toward low complexity. The segment covering 7941-7952 (TTAKDRGHKEGF) has biased composition (basic and acidic residues). Positions 7986 to 7996 (SCHSELGSGSQ) are enriched in polar residues. Low complexity-rich tracts occupy residues 8000 to 8014 (GPPSSQSLGSLPPQS) and 8053 to 8073 (GSLSEGPVPVPSSSPGSASQV). Phosphoserine is present on Ser-8161. In terms of domain architecture, Ig-like 55 spans 8380–8464 (KGRDQELSDE…VSNPLGTAVT (85 aa)). A disulfide bridge links Cys-8401 with Cys-8453. Positions 8474 to 8566 (PSSSPRPEVG…PSEQVLLGGP (93 aa)) constitute a Fibronectin type-III 3 domain. Residues 8590 to 8842 (FAFQMQIRRG…ASTCLQCGWL (253 aa)) enclose the Protein kinase 2 domain. ATP-binding positions include 8596–8604 (IRRGRFSVV) and Lys-8619. Asp-8709 acts as the Proton acceptor in catalysis.

It belongs to the protein kinase superfamily. CAMK Ser/Thr protein kinase family. In terms of assembly, interacts (via protein kinase domain 1) with CDH2 and (via protein kinase domain 1) with ATP1B1. Isoform 2 is found in a complex with DSG2, DESM, GJA1, CDH2 and VCL. Isoform 3 is found in a complex with DSG2, DESM, GJA1, CDH2, ANK3 and VCL. Requires Mg(2+) as cofactor. In terms of processing, autophosphorylated by protein kinase domain 1 and 2. Post-translationally, two small isoforms, one probably containing protein kinase domain 2 and a partial protein kinase domain 1 and one containing only protein kinase domain 2, are glycosylated. As to expression, expressed in skeletal muscles including flexor digitorum brevis (FDB), soleus and tibialis anterior muscles, and to a lesser extent in heart muscles (at protein level). Isoform 2 and isoform 3 are expressed in the myocardium (at protein level).

Its subcellular location is the cytoplasm. It localises to the myofibril. It is found in the sarcomere. The protein resides in the m line. The protein localises to the z line. Its subcellular location is the cell membrane. It localises to the sarcolemma. It is found in the nucleus. The protein resides in the secreted. The enzyme catalyses L-seryl-[protein] + ATP = O-phospho-L-seryl-[protein] + ADP + H(+). It catalyses the reaction L-threonyl-[protein] + ATP = O-phospho-L-threonyl-[protein] + ADP + H(+). Structural component of striated muscles which plays a role in myofibrillogenesis. Probably involved in the assembly of myosin into sarcomeric A bands in striated muscle. Has serine/threonine protein kinase activity and phosphorylates N-cadherin CDH2 and sodium/potassium-transporting ATPase subunit ATP1B1. Binds (via the PH domain) strongly to phosphatidylinositol 3,4-bisphosphate (PtdIns(3,4)P2) and phosphatidylinositol 4,5-bisphosphate (PtdIns(4,5)P2), and to a lesser extent to phosphatidylinositol 3-phosphate (PtdIns(3)P), phosphatidylinositol 4-phosphate (PtdIns(4)P), phosphatidylinositol 5-phosphate (PtdIns(5)P) and phosphatidylinositol 3,4,5-trisphosphate (PtdIns(3,4,5)P3). In terms of biological role, isoform 2 and isoform 3: bind phosphatidylinositol bisphosphates (PIP2s) via their PH domains and negatively regulate the PI3K/AKT/mTOR signaling pathway, thus contributing to the regulation of cardiomyocyte size and adhesion. The polypeptide is Obscurin (Mus musculus (Mouse)).